The following is a 329-amino-acid chain: MNIAVLGAGAWGTALAICLSARHRVTLWTRNVEHLAELAALRTNQRYLPRQPLPDSIHLVSALSEALERAELVFVVVPVAGLRTTLQQMVALNPSLPLILACKGFETGSAKLPCQVVEEVYPASITCGVLSGPSFAREVAQGLPAALTLASHDEIFARSVAGEIRTASLRVYSGNDVIGVEVGGALKNVIAIAAGISDGIAFGNNARAALITRGLAEITRLGMALGGCRETFTGLTGIGDLILTCTGNLSRNRRVGMMLAAGRQLAEILPEIGHVTEGVYTVREAYGLGQRLQIDMPVTQAVYSILYEQVPVEIAIQDMLDREPGAETD.

NADPH is bound by residues W11, R30, and K103. Sn-glycerol 3-phosphate contacts are provided by K103, G132, and S134. A136 is an NADPH binding site. Sn-glycerol 3-phosphate is bound by residues K187, D240, S250, R251, and N252. Catalysis depends on K187, which acts as the Proton acceptor. R251 is an NADPH binding site. 2 residues coordinate NADPH: V275 and E277.

Belongs to the NAD-dependent glycerol-3-phosphate dehydrogenase family.

The protein localises to the cytoplasm. It catalyses the reaction sn-glycerol 3-phosphate + NAD(+) = dihydroxyacetone phosphate + NADH + H(+). It carries out the reaction sn-glycerol 3-phosphate + NADP(+) = dihydroxyacetone phosphate + NADPH + H(+). It functions in the pathway membrane lipid metabolism; glycerophospholipid metabolism. Catalyzes the reduction of the glycolytic intermediate dihydroxyacetone phosphate (DHAP) to sn-glycerol 3-phosphate (G3P), the key precursor for phospholipid synthesis. This is Glycerol-3-phosphate dehydrogenase [NAD(P)+] from Nitrosomonas europaea (strain ATCC 19718 / CIP 103999 / KCTC 2705 / NBRC 14298).